We begin with the raw amino-acid sequence, 200 residues long: Holliday junction branch migration complex subunit RuvA (200 aa).

The interval 1–63 is domain I; it reads MIASVRGEVL…EDSMTLYGFP (63 aa). A domain II region spans residues 64–142; the sequence is DSESKELFGL…AVGSTSGAVP (79 aa). The segment at 142–146 is flexible linker; the sequence is PLGAG. Residues 147–200 form a domain III region; sequence GGGSVRDQIVEALVGLGFPAKQAEQATDSVLAEAPESTTSSALRSALSLLGKTR.

Belongs to the RuvA family. Homotetramer. Forms an RuvA(8)-RuvB(12)-Holliday junction (HJ) complex. HJ DNA is sandwiched between 2 RuvA tetramers; dsDNA enters through RuvA and exits via RuvB. An RuvB hexamer assembles on each DNA strand where it exits the tetramer. Each RuvB hexamer is contacted by two RuvA subunits (via domain III) on 2 adjacent RuvB subunits; this complex drives branch migration. In the full resolvosome a probable DNA-RuvA(4)-RuvB(12)-RuvC(2) complex forms which resolves the HJ.

It localises to the cytoplasm. Functionally, the RuvA-RuvB-RuvC complex processes Holliday junction (HJ) DNA during genetic recombination and DNA repair, while the RuvA-RuvB complex plays an important role in the rescue of blocked DNA replication forks via replication fork reversal (RFR). RuvA specifically binds to HJ cruciform DNA, conferring on it an open structure. The RuvB hexamer acts as an ATP-dependent pump, pulling dsDNA into and through the RuvAB complex. HJ branch migration allows RuvC to scan DNA until it finds its consensus sequence, where it cleaves and resolves the cruciform DNA. The polypeptide is Holliday junction branch migration complex subunit RuvA (Rhodococcus opacus (strain B4)).